The primary structure comprises 604 residues: MAAVRGLRISVKAEATATTAEPRGPEPEPMEVEEGELETIPVRRSLRELIPDTSRRYENKAGSFITGIDVTSKEAIEKKEQRAKRFHFRAEVNLAQRNVALDRDMMKKAIPKVRLDTIYICGVDEMSTQDIFAYFKEYPPAHIEWLDDTSCNVVWLDEVTATRALINMSSFPDQEKPKGGENNEEKTAEKNKKEKQEESTDDETEEGEVEDENPSDIELDALTQVEEDSLLRNDLRPANKLAKGNKLFMRFATKDDKKELGAARRSQYYMKYGNPNYGGMKGILSNSWKRRYHSRRIHRDVIKKRTLIGDDVGLTPPYKHRHSGLVNVPEEPIEEEEEEEEVQDMDEDDRVVVEYRDDLQPFKQSRDRGAARRSSASASDSDEMDYDLELKMISTPSPKKSMKMTMYADEVESQLKNIRNSMRADSIATSNVKNRIGSKGLSDKVVDVRLLLEEKRQNNNGLRQPNSIVKSDVRQRLGKRPHSPEVKPPSSISAPRREPISDVHSRLGIPKQDVKGLYSDTREKKSGNLWTRLGSAPKTQEKTSDKPENSVASPEEDDSELQRVWGALIKEKGESRQKKSRLDNLPSLQIEISRESSSGSDTES.

Positions Met1–Glu36 are disordered. An RNA recognition motif (RRM) domain region spans residues Asp116–Pro177. Residues Trp145 to Asp148 carry the WLDD motif; essential for 7-methylguanosine-containing mRNA cap binding motif. Disordered regions lie at residues Met168–Leu219, Lys319–Glu383, and Gln457–Ser604. The span at Asp173–Glu198 shows a compositional bias: basic and acidic residues. Acidic residues-rich tracts occupy residues Ser199 to Leu219 and Glu331 to Asp349. The segment covering Arg350–Ala370 has biased composition (basic and acidic residues). Positions Asn458–Val469 are enriched in polar residues. Composition is skewed to basic and acidic residues over residues Pro495–Ser505, Thr539–Glu548, and Ile569–Leu582. The span at Glu595–Ser604 shows a compositional bias: low complexity.

It belongs to the NCBP3 family. As to quaternary structure, component of an alternative cap-binding complex (CBC) composed of NCBP1/CBP80 and NCBP3.

It is found in the nucleus. The protein resides in the cytoplasm. Associates with NCBP1/CBP80 to form an alternative cap-binding complex (CBC) which plays a key role in mRNA export. NCBP3 serves as adapter protein linking the capped RNAs (m7GpppG-capped RNA) to NCBP1/CBP80. Unlike the conventional CBC with NCBP2 which binds both small nuclear RNA (snRNA) and messenger (mRNA) and is involved in their export from the nucleus, the alternative CBC with NCBP3 does not bind snRNA and associates only with mRNA thereby playing a role in only mRNA export. In Gallus gallus (Chicken), this protein is Nuclear cap-binding protein subunit 3.